The primary structure comprises 256 residues: MSLKKSPFFELRSGSVDTLLFTVKTTDLDALRAELVKRFEATPEFFADDVVAIDVRRLAEGERVALSDIRQMLNDVRMRPVGVVAQASQAWAAEAGLPLLEARDRRGATAKPEPADEAEPPVAAAAAEAVPEPAPELAPSAPTTGAQTLVIDRPLRSGQQIYAKGDLVVLAPVSHGAEIIAEGNIHIYAPLRGRALAGVHGNHDARIFCTCLEPELISIAGIYRTTENPLPADILGKAVQIRLEEEKLMIEPLRLT.

Positions 105 to 143 (RRGATAKPEPADEAEPPVAAAAAEAVPEPAPELAPSAPT) are disordered. Residues 120 to 142 (PPVAAAAAEAVPEPAPELAPSAP) show a composition bias toward low complexity.

It belongs to the MinC family. As to quaternary structure, interacts with MinD and FtsZ.

Its function is as follows. Cell division inhibitor that blocks the formation of polar Z ring septums. Rapidly oscillates between the poles of the cell to destabilize FtsZ filaments that have formed before they mature into polar Z rings. Prevents FtsZ polymerization. The protein is Probable septum site-determining protein MinC of Burkholderia vietnamiensis (strain G4 / LMG 22486) (Burkholderia cepacia (strain R1808)).